The sequence spans 262 residues: Apolipoprotein A-I (262 aa).

The signal sequence occupies residues 1-18 (MKFLALALTILLAAATQA). The 3 X approximate tandem repeats stretch occupies residues 32 to 63 (VKVAMMEYMAQVKETGQRSIDLLDDTEFKEYK). Tandem repeats lie at residues 64 to 85 (VQLS…QSLA) and 87 to 107 (YSEA…AEVM). The segment at 64–262 (VQLSQSLDNL…YETISQAMKA (199 aa)) is 10 X approximate tandem repeats. Residues 108–118 (KDVEDVRTQLE) form a 3; half-length repeat. 5 tandem repeats follow at residues 119–140 (PKRA…KKLE), 141–162 (PLIK…VKME), 163–184 (PVVE…AKLM), 185–206 (PIVE…TLAA), and 207–228 (PYAE…EKVG). The 9; half-length repeat unit spans residues 229–239 (PLTNDFKGQVG). Copy 10 of the repeat occupies 240 to 262 (PAAEQAKEKLMDFYETISQAMKA).

Belongs to the apolipoprotein A1/A4/E family.

Its subcellular location is the secreted. Functionally, participates in the reverse transport of cholesterol from tissues to the liver for excretion by promoting cholesterol efflux from tissues and by acting as a cofactor for the lecithin cholesterol acyltransferase (LCAT). In Salmo trutta (Brown trout), this protein is Apolipoprotein A-I (apoa1).